The following is a 1373-amino-acid chain: DNA-directed RNA polymerase subunit beta (1373 aa).

The protein belongs to the RNA polymerase beta chain family. As to quaternary structure, the RNAP catalytic core consists of 2 alpha, 1 beta, 1 beta' and 1 omega subunit. When a sigma factor is associated with the core the holoenzyme is formed, which can initiate transcription.

It catalyses the reaction RNA(n) + a ribonucleoside 5'-triphosphate = RNA(n+1) + diphosphate. Functionally, DNA-dependent RNA polymerase catalyzes the transcription of DNA into RNA using the four ribonucleoside triphosphates as substrates. In Rickettsia felis (strain ATCC VR-1525 / URRWXCal2) (Rickettsia azadi), this protein is DNA-directed RNA polymerase subunit beta.